The following is a 425-amino-acid chain: Elongation factor 1-alpha (425 aa).

Residues 5–221 (KPHMNLAVIG…DTFKEPSKPT (217 aa)) enclose the tr-type G domain. Residues 14–21 (GHIDHGKS) are G1. Residue 14 to 21 (GHIDHGKS) coordinates GTP. Position 21 (S21) interacts with Mg(2+). The tract at residues 70 to 74 (GITID) is G2. The tract at residues 91–94 (DCPG) is G3. Residues 91–95 (DCPGH) and 146–149 (NKMD) contribute to the GTP site. The G4 stretch occupies residues 146–149 (NKMD). Residues 185 to 187 (SSL) form a G5 region.

It belongs to the TRAFAC class translation factor GTPase superfamily. Classic translation factor GTPase family. EF-Tu/EF-1A subfamily.

Its subcellular location is the cytoplasm. The enzyme catalyses GTP + H2O = GDP + phosphate + H(+). In terms of biological role, GTP hydrolase that promotes the GTP-dependent binding of aminoacyl-tRNA to the A-site of ribosomes during protein biosynthesis. The protein is Elongation factor 1-alpha of Methanoregula boonei (strain DSM 21154 / JCM 14090 / 6A8).